A 377-amino-acid polypeptide reads, in one-letter code: Protein RecA (377 aa).

76–83 (GPESSGKT) serves as a coordination point for ATP.

This sequence belongs to the RecA family.

The protein localises to the cytoplasm. Functionally, can catalyze the hydrolysis of ATP in the presence of single-stranded DNA, the ATP-dependent uptake of single-stranded DNA by duplex DNA, and the ATP-dependent hybridization of homologous single-stranded DNAs. It interacts with LexA causing its activation and leading to its autocatalytic cleavage. The sequence is that of Protein RecA from Corynebacterium aurimucosum (strain ATCC 700975 / DSM 44827 / CIP 107346 / CN-1) (Corynebacterium nigricans).